The primary structure comprises 152 residues: Nucleoside diphosphate kinase (152 aa).

ATP-binding residues include K11, F59, R87, T93, R104, and N114. Catalysis depends on H117, which acts as the Pros-phosphohistidine intermediate.

This sequence belongs to the NDK family. In terms of assembly, homotetramer. Mg(2+) serves as cofactor.

The protein localises to the cytoplasm. The catalysed reaction is a 2'-deoxyribonucleoside 5'-diphosphate + ATP = a 2'-deoxyribonucleoside 5'-triphosphate + ADP. The enzyme catalyses a ribonucleoside 5'-diphosphate + ATP = a ribonucleoside 5'-triphosphate + ADP. Major role in the synthesis of nucleoside triphosphates other than ATP. The ATP gamma phosphate is transferred to the NDP beta phosphate via a ping-pong mechanism, using a phosphorylated active-site intermediate. The chain is Nucleoside diphosphate kinase from Prochlorococcus marinus subsp. pastoris (strain CCMP1986 / NIES-2087 / MED4).